Consider the following 147-residue polypeptide: Large ribosomal subunit protein uL15 (147 aa).

A disordered region spans residues 21 to 49 (RVGRGEGSKGKTAGRGTKGTKARAPVRPG).

It belongs to the universal ribosomal protein uL15 family. In terms of assembly, part of the 50S ribosomal subunit.

Its function is as follows. Binds to the 23S rRNA. This is Large ribosomal subunit protein uL15 from Tropheryma whipplei (strain TW08/27) (Whipple's bacillus).